The following is a 196-amino-acid chain: Imidazoleglycerol-phosphate dehydratase (196 aa).

This sequence belongs to the imidazoleglycerol-phosphate dehydratase family.

The protein localises to the cytoplasm. The catalysed reaction is D-erythro-1-(imidazol-4-yl)glycerol 3-phosphate = 3-(imidazol-4-yl)-2-oxopropyl phosphate + H2O. Its pathway is amino-acid biosynthesis; L-histidine biosynthesis; L-histidine from 5-phospho-alpha-D-ribose 1-diphosphate: step 6/9. This chain is Imidazoleglycerol-phosphate dehydratase, found in Caulobacter sp. (strain K31).